A 123-amino-acid polypeptide reads, in one-letter code: PTS system glucitol/sorbitol-specific EIIA component (123 aa).

In terms of domain architecture, PTS EIIA type-5 spans 3-116; sequence VIYQTTITRI…PDDIAPGSVL (114 aa). The Tele-phosphohistidine intermediate role is filled by His43. Phosphohistidine; by HPr is present on His43.

The protein resides in the cytoplasm. In terms of biological role, the phosphoenolpyruvate-dependent sugar phosphotransferase system (sugar PTS), a major carbohydrate active transport system, catalyzes the phosphorylation of incoming sugar substrates concomitantly with their translocation across the cell membrane. The enzyme II complex composed of SrlA, SrlB and SrlE is involved in glucitol/sorbitol transport. It can also use D-mannitol. This is PTS system glucitol/sorbitol-specific EIIA component (srlB) from Escherichia coli (strain K12).